The sequence spans 428 residues: Glutamate-1-semialdehyde 2,1-aminomutase (428 aa).

At Lys265 the chain carries N6-(pyridoxal phosphate)lysine.

This sequence belongs to the class-III pyridoxal-phosphate-dependent aminotransferase family. HemL subfamily. In terms of assembly, homodimer. The cofactor is pyridoxal 5'-phosphate.

Its subcellular location is the cytoplasm. It carries out the reaction (S)-4-amino-5-oxopentanoate = 5-aminolevulinate. It participates in porphyrin-containing compound metabolism; protoporphyrin-IX biosynthesis; 5-aminolevulinate from L-glutamyl-tRNA(Glu): step 2/2. This chain is Glutamate-1-semialdehyde 2,1-aminomutase, found in Vesicomyosocius okutanii subsp. Calyptogena okutanii (strain HA).